The sequence spans 403 residues: S-adenosylmethionine synthase (403 aa).

141-146 provides a ligand contact to ATP; it reads GQGSVD.

The protein belongs to the AdoMet synthase 2 family. Mg(2+) serves as cofactor.

It catalyses the reaction L-methionine + ATP + H2O = S-adenosyl-L-methionine + phosphate + diphosphate. Its pathway is amino-acid biosynthesis; S-adenosyl-L-methionine biosynthesis; S-adenosyl-L-methionine from L-methionine: step 1/1. In terms of biological role, catalyzes the formation of S-adenosylmethionine from methionine and ATP. The chain is S-adenosylmethionine synthase from Methanococcus aeolicus (strain ATCC BAA-1280 / DSM 17508 / OCM 812 / Nankai-3).